The sequence spans 181 residues: Adenine phosphoribosyltransferase (181 aa).

This sequence belongs to the purine/pyrimidine phosphoribosyltransferase family. As to quaternary structure, homodimer.

It is found in the cytoplasm. The enzyme catalyses AMP + diphosphate = 5-phospho-alpha-D-ribose 1-diphosphate + adenine. Its pathway is purine metabolism; AMP biosynthesis via salvage pathway; AMP from adenine: step 1/1. Its function is as follows. Catalyzes a salvage reaction resulting in the formation of AMP, that is energically less costly than de novo synthesis. In Brucella anthropi (strain ATCC 49188 / DSM 6882 / CCUG 24695 / JCM 21032 / LMG 3331 / NBRC 15819 / NCTC 12168 / Alc 37) (Ochrobactrum anthropi), this protein is Adenine phosphoribosyltransferase.